A 424-amino-acid chain; its full sequence is Histidine--tRNA ligase (424 aa).

This sequence belongs to the class-II aminoacyl-tRNA synthetase family. In terms of assembly, homodimer.

It is found in the cytoplasm. The enzyme catalyses tRNA(His) + L-histidine + ATP = L-histidyl-tRNA(His) + AMP + diphosphate + H(+). The polypeptide is Histidine--tRNA ligase (Desulfitobacterium hafniense (strain DSM 10664 / DCB-2)).